The chain runs to 472 residues: Protein PIN-LIKES 1 (472 aa).

Topologically, residues 1–93 (MSLTQSAKLH…FYSMRMRLLD (93 aa)) are lumenal. A helical membrane pass occupies residues 94–114 (LFITSSIPVAKILLITGIGFY). Over 115–133 (LALDQVNILNHDARKQLNN) the chain is Cytoplasmic. A helical transmembrane segment spans residues 134-154 (IVFYVFSPSLVASSLSETITY). Residues 155 to 161 (ESMVKMW) are Lumenal-facing. Residues 162–182 (FMPLNVLLTFIIGSFLGWIVI) form a helical membrane-spanning segment. Over 183 to 193 (KITKPPSHLRG) the chain is Cytoplasmic. A helical transmembrane segment spans residues 194–214 (IIVGCCAAGNLGNMPLIIIPA). Over 215 to 231 (ICNEKGSPFGDPESCEK) the chain is Lumenal. The chain crosses the membrane as a helical span at residues 232 to 252 (FGLGYIALSMAIGAIYIWTYV). Over 253 to 309 (YNLMRMLANPAGETAINSTSSTMPLISPKVEVAEQVGTWGKVKQRVCSVAEKINLRT) the chain is Cytoplasmic. The chain crosses the membrane as a helical span at residues 310-330 (IFAPSTIAALIALAVGLNPLL). Over 331–347 (RKLLVGNTAPLRVIEDS) the chain is Lumenal. A helical membrane pass occupies residues 348–368 (VSLLGDGAIPVLTLIVGGNLL). Residues 369 to 379 (NGLRGSGINKS) are Cytoplasmic-facing. Residues 380 to 400 (VIMGVVVVRYLLLPILGVFIV) traverse the membrane as a helical segment. Residues 401–413 (RGAHYLGLVTSEP) are Lumenal-facing. Residues 414-434 (LYQFVLLLQYVVPPAMNLGTI) traverse the membrane as a helical segment. Residues 435-446 (TQLFGSGESECS) are Cytoplasmic-facing. Residues 447 to 467 (VILFWSYALASVSLTVWPTFF) traverse the membrane as a helical segment. Topologically, residues 468-472 (MWLVA) are lumenal.

The protein belongs to the auxin efflux carrier (TC 2.A.69.2) family. In terms of tissue distribution, expressed in flowers.

It localises to the endoplasmic reticulum membrane. Involved in cellular auxin homeostasis by regulating auxin metabolism. Regulates intracellular auxin accumulation at the endoplasmic reticulum and thus auxin availability for nuclear auxin signaling. In Arabidopsis thaliana (Mouse-ear cress), this protein is Protein PIN-LIKES 1.